A 479-amino-acid chain; its full sequence is Serine--tRNA ligase, mitochondrial (479 aa).

Residues 1–42 (MRLTNRRFSTFLGNALPSKKKGFIFMSQLLYLRTFSTHTSYL) constitute a mitochondrion transit peptide. 287-289 (TAE) provides a ligand contact to L-serine. 317–319 (RRE) serves as a coordination point for ATP. Residue Glu-340 participates in L-serine binding. 404 to 407 (EITS) provides a ligand contact to ATP. Residue Thr-438 coordinates L-serine.

Belongs to the class-II aminoacyl-tRNA synthetase family. Type-1 seryl-tRNA synthetase subfamily. As to quaternary structure, homodimer. The tRNA molecule probably binds across the dimer.

The protein localises to the mitochondrion matrix. The enzyme catalyses tRNA(Ser) + L-serine + ATP = L-seryl-tRNA(Ser) + AMP + diphosphate + H(+). Its function is as follows. Catalyzes the attachment of serine to tRNA(Ser). Is also probably able to aminoacylate tRNA(Sec) with serine, to form the misacylated tRNA L-seryl-tRNA(Sec), which will be further converted into selenocysteinyl-tRNA(Sec). The sequence is that of Serine--tRNA ligase, mitochondrial (dia4) from Schizosaccharomyces pombe (strain 972 / ATCC 24843) (Fission yeast).